Here is a 269-residue protein sequence, read N- to C-terminus: Cytochrome c oxidase subunit 3 (269 aa).

7 helical membrane passes run 21–41 (PWPIVVSFALMSLALSLALTM), 45–65 (IGHMYLIYLSILTVTLSATLW), 90–110 (GFLLFVVSEILIFAALFWAYF), 138–160 (PLLNTIILLSSGATITYSHHGLV), 167–187 (ALSGLLITFWLIVIFVTCQYI), 205–225 (FYAGTGLHFLHMVMLAAMLGI), and 247–267 (VLYCHILDIIWLFLYIVFYWW).

This sequence belongs to the cytochrome c oxidase subunit 3 family. In terms of assembly, component of the cytochrome c oxidase (complex IV, CIV), a multisubunit enzyme composed of a catalytic core of 3 subunits and several supernumerary subunits. The complex exists as a monomer or a dimer and forms supercomplexes (SCs) in the inner mitochondrial membrane with ubiquinol-cytochrome c oxidoreductase (cytochrome b-c1 complex, complex III, CIII).

Its subcellular location is the mitochondrion inner membrane. The catalysed reaction is 4 Fe(II)-[cytochrome c] + O2 + 8 H(+)(in) = 4 Fe(III)-[cytochrome c] + 2 H2O + 4 H(+)(out). Component of the cytochrome c oxidase, the last enzyme in the mitochondrial electron transport chain which drives oxidative phosphorylation. The respiratory chain contains 3 multisubunit complexes succinate dehydrogenase (complex II, CII), ubiquinol-cytochrome c oxidoreductase (cytochrome b-c1 complex, complex III, CIII) and cytochrome c oxidase (complex IV, CIV), that cooperate to transfer electrons derived from NADH and succinate to molecular oxygen, creating an electrochemical gradient over the inner membrane that drives transmembrane transport and the ATP synthase. Cytochrome c oxidase is the component of the respiratory chain that catalyzes the reduction of oxygen to water. Electrons originating from reduced cytochrome c in the intermembrane space (IMS) are transferred via the dinuclear copper A center (CU(A)) of subunit 2 and heme A of subunit 1 to the active site in subunit 1, a binuclear center (BNC) formed by heme A3 and copper B (CU(B)). The BNC reduces molecular oxygen to 2 water molecules using 4 electrons from cytochrome c in the IMS and 4 protons from the mitochondrial matrix. The sequence is that of Cytochrome c oxidase subunit 3 (COX3) from Kluyveromyces lactis (strain ATCC 8585 / CBS 2359 / DSM 70799 / NBRC 1267 / NRRL Y-1140 / WM37) (Yeast).